The sequence spans 676 residues: Envelope fusion protein (676 aa).

A signal peptide spans 1–16 (MSPLALIVLLAWHATA). Asparagine 76 and asparagine 87 each carry an N-linked (GlcNAc...) asparagine; by host glycan. A coiled-coil region spans residues 169-215 (ARELHDLAKTSNALNEQIKEVTDELVNIAKFEEHKQCLERQRDDLCG). Asparagine 266, asparagine 469, asparagine 505, and asparagine 548 each carry an N-linked (GlcNAc...) asparagine; by host glycan. A helical membrane pass occupies residues 577-597 (CATAEAVVACVVLFLVALLLF). Residue asparagine 628 is glycosylated (N-linked (GlcNAc...) asparagine; by host).

N-glycosylated.

It is found in the virion membrane. Its subcellular location is the host cell membrane. Its function is as follows. Envelope glycoprotein which mediates the fusion of viral and host endosomal membranes leading to virus entry into the host cell. This chain is Envelope fusion protein, found in Lepidoptera (butterflies and moths).